The primary structure comprises 892 residues: Alanine--tRNA ligase (892 aa).

4 residues coordinate Zn(2+): H594, H598, C702, and H706.

It belongs to the class-II aminoacyl-tRNA synthetase family. Requires Zn(2+) as cofactor.

It localises to the cytoplasm. It catalyses the reaction tRNA(Ala) + L-alanine + ATP = L-alanyl-tRNA(Ala) + AMP + diphosphate. In terms of biological role, catalyzes the attachment of alanine to tRNA(Ala) in a two-step reaction: alanine is first activated by ATP to form Ala-AMP and then transferred to the acceptor end of tRNA(Ala). Also edits incorrectly charged Ser-tRNA(Ala) and Gly-tRNA(Ala) via its editing domain. This is Alanine--tRNA ligase from Pyrobaculum neutrophilum (strain DSM 2338 / JCM 9278 / NBRC 100436 / V24Sta) (Thermoproteus neutrophilus).